The primary structure comprises 193 residues: dCTP deaminase (193 aa).

DCTP contacts are provided by residues 110 to 115 (RSSLAR), Asp-128, 136 to 138 (VLE), Tyr-171, Lys-178, and Gln-182. Glu-138 functions as the Proton donor/acceptor in the catalytic mechanism. The disordered stretch occupies residues 169–193 (RPYNSRQDAKYRGQQGAVASRIDKD).

It belongs to the dCTP deaminase family. As to quaternary structure, homotrimer.

The enzyme catalyses dCTP + H2O + H(+) = dUTP + NH4(+). It functions in the pathway pyrimidine metabolism; dUMP biosynthesis; dUMP from dCTP (dUTP route): step 1/2. Functionally, catalyzes the deamination of dCTP to dUTP. In Yersinia pestis bv. Antiqua (strain Antiqua), this protein is dCTP deaminase.